Reading from the N-terminus, the 529-residue chain is Nucleolar protein 58 (529 aa).

A Phosphothreonine modification is found at Thr34. Phosphoserine is present on Ser109. Residues 155 to 400 (ADKVDTMIVQ…LEARLRTLED (246 aa)) are sufficient for interaction with NOPCHAP1. Residue Lys157 forms a Glycyl lysine isopeptide (Lys-Gly) (interchain with G-Cter in SUMO2) linkage. A Nop domain is found at 282–400 (IAPNVTVMVG…LEARLRTLED (119 aa)). Ser304 and Ser351 each carry phosphoserine. Glycyl lysine isopeptide (Lys-Gly) (interchain with G-Cter in SUMO2) cross-links involve residues Lys353, Lys411, Lys415, Lys422, Lys426, Lys441, Lys444, and Lys465. The tract at residues 409–529 (TGKALAKTEK…KKKKKRENED (121 aa)) is disordered. Positions 414-427 (AKTEKYEHKSEVKT) are enriched in basic and acidic residues. Lys467 is covalently cross-linked (Glycyl lysine isopeptide (Lys-Gly) (interchain with G-Cter in SUMO); alternate). A Glycyl lysine isopeptide (Lys-Gly) (interchain with G-Cter in SUMO1); alternate cross-link involves residue Lys467. Residue Lys467 forms a Glycyl lysine isopeptide (Lys-Gly) (interchain with G-Cter in SUMO2); alternate linkage. Acidic residues predominate over residues 469-481 (EEEEEEKVAEEEE). Ser483 carries the phosphoserine modification. Residue Lys485 forms a Glycyl lysine isopeptide (Lys-Gly) (interchain with G-Cter in SUMO2) linkage. A compositionally biased stretch (basic residues) spans 485–495 (KKKKKRGKKKH). Lys497 participates in a covalent cross-link: Glycyl lysine isopeptide (Lys-Gly) (interchain with G-Cter in SUMO); alternate. Lys497 is covalently cross-linked (Glycyl lysine isopeptide (Lys-Gly) (interchain with G-Cter in SUMO2); alternate). 2 positions are modified to phosphoserine: Ser502 and Ser514. A compositionally biased stretch (basic residues) spans 517–529 (KKKKKKKKRENED).

It belongs to the NOP5/NOP56 family. As to quaternary structure, core component of box C/D small nucleolar ribonucleoprotein (snoRNP) particles; the core proteins SNU13, NOP56, NOP58 and FBL or FBLL1 assemble stepwise onto the snoRNA. Interacts with NOLC1/Nopp140. Interacts with NOPCHAP1, NUFIP1, RUVBL1 and RUVBL2; NOPCHAP1 bridges the association of NOP58 with RUVBL1:RUVBL2 and NUFIP1. Interacts with PIH1D1. Part of the small subunit (SSU) processome, composed of more than 70 proteins and the RNA chaperone small nucleolar RNA (snoRNA) U3. In terms of processing, sumoylation is essential for high-affinity binding to snoRNAs. In terms of tissue distribution, ubiquitous.

The protein resides in the nucleus. Its subcellular location is the nucleolus. The protein localises to the nucleoplasm. Functionally, required for the biogenesis of box C/D snoRNAs such as U3, U8 and U14 snoRNAs. Part of the small subunit (SSU) processome, first precursor of the small eukaryotic ribosomal subunit. During the assembly of the SSU processome in the nucleolus, many ribosome biogenesis factors, an RNA chaperone and ribosomal proteins associate with the nascent pre-rRNA and work in concert to generate RNA folding, modifications, rearrangements and cleavage as well as targeted degradation of pre-ribosomal RNA by the RNA exosome. Core component of box C/D small nucleolar ribonucleoprotein (snoRNP) complexes that function in methylation of multiple sites on ribosomal RNAs (rRNAs) and messenger RNAs (mRNAs). The protein is Nucleolar protein 58 of Homo sapiens (Human).